A 453-amino-acid polypeptide reads, in one-letter code: Gastrin/cholecystokinin type B receptor (453 aa).

Residues 1–57 are Extracellular-facing; the sequence is MELLKLNRSAQGSGAGPGASLCRAGGALLNSSGAGNLSCEPPRLRGAGTRELELAIR. Residues asparagine 7, asparagine 30, and asparagine 36 are each glycosylated (N-linked (GlcNAc...) asparagine). Residues 58 to 79 traverse the membrane as a helical segment; it reads VTLYAVIFLMSVGGNVLIIVVL. Over 80-87 the chain is Cytoplasmic; it reads GLSRRLRT. Residues 88–109 traverse the membrane as a helical segment; sequence VTNAFLLSLAVSDLLLAVACMP. Residues 110-131 lie on the Extracellular side of the membrane; that stretch reads FTLLPNLMGTFIFGTVVCKAVS. The cysteines at positions 127 and 206 are disulfide-linked. The helical transmembrane segment at 132-150 threads the bilayer; sequence YLMGVSVSVSTLSLVAIAL. Residues 151–170 are Cytoplasmic-facing; sequence ERYSAICRPLQARVWQTRSH. Residues 171 to 189 traverse the membrane as a helical segment; the sequence is AARVIIATWMLSGLLMVPY. Topologically, residues 190 to 220 are extracellular; sequence PVYTAVQPAGGARALQCVHRWPSARVRQTWS. The chain crosses the membrane as a helical span at residues 221–243; that stretch reads VLLLLLLFFVPGVVMAVAYGLIS. Topologically, residues 244-339 are cytoplasmic; sequence RELYLGLRFD…KLLAKKRVVR (96 aa). Residues 258-286 are disordered; the sequence is SESRVRSQGGLRGGAGPGPAPPNGSCRPE. The chain crosses the membrane as a helical span at residues 340–361; sequence MLLVIVVLFFLCWLPLYSANTW. The Extracellular portion of the chain corresponds to 362–379; the sequence is RAFDSSGAHRALSGAPIS. Residues 380–400 form a helical membrane-spanning segment; that stretch reads FIHLLSYASACVNPLVYCFMH. Over 401–453 the chain is Cytoplasmic; the sequence is RRFRQACLETCARCCPRPPRARPRPLPDEDPPTPSIASLSRLSYTTISTLGPG. Cysteine 414 carries the S-palmitoyl cysteine lipid modification. Residues 422-453 are disordered; it reads RPRPLPDEDPPTPSIASLSRLSYTTISTLGPG. The segment covering 435 to 453 has biased composition (polar residues); it reads SIASLSRLSYTTISTLGPG.

Belongs to the G-protein coupled receptor 1 family. Parietal cells, pancreas, brain and various neoplastic tissues.

The protein localises to the cell membrane. Functionally, receptor for gastrin and cholecystokinin. The CCK-B receptors occur throughout the central nervous system where they modulate anxiety, analgesia, arousal, and neuroleptic activity. This receptor mediates its action by association with G proteins that activate a phosphatidylinositol-calcium second messenger system. In Canis lupus familiaris (Dog), this protein is Gastrin/cholecystokinin type B receptor (CCKBR).